The sequence spans 90 residues: Small ribosomal subunit protein bS16 (90 aa).

This sequence belongs to the bacterial ribosomal protein bS16 family.

The sequence is that of Small ribosomal subunit protein bS16 from Brevibacillus brevis (strain 47 / JCM 6285 / NBRC 100599).